Here is a 235-residue protein sequence, read N- to C-terminus: Large ribosomal subunit protein uL1 (235 aa).

Belongs to the universal ribosomal protein uL1 family. In terms of assembly, part of the 50S ribosomal subunit.

In terms of biological role, binds directly to 23S rRNA. The L1 stalk is quite mobile in the ribosome, and is involved in E site tRNA release. Functionally, protein L1 is also a translational repressor protein, it controls the translation of the L11 operon by binding to its mRNA. This Synechococcus sp. (strain CC9605) protein is Large ribosomal subunit protein uL1.